The primary structure comprises 230 residues: Porin OmpL (230 aa).

The signal sequence occupies residues Met1–Ala20.

This sequence belongs to the oligogalacturonate-specific porin KdgM (TC 1.B.35) family. OmpL subfamily.

It is found in the cell outer membrane. Its function is as follows. Outer membrane channel protein that allows an efficient diffusion of low-molecular-weight solutes such as small sugars and tetraglycine. However, the specific substrate recognized by the OmpL channel is unknown. This chain is Porin OmpL (ompL), found in Salmonella typhimurium (strain LT2 / SGSC1412 / ATCC 700720).